The chain runs to 125 residues: Small ribosomal subunit protein uS13 (125 aa).

The disordered stretch occupies residues 92-125 (RRSLPVRGQRTQTNARTRKGKRKTVAGKKKATKK). The span at 107 to 125 (RTRKGKRKTVAGKKKATKK) shows a compositional bias: basic residues.

The protein belongs to the universal ribosomal protein uS13 family. In terms of assembly, part of the 30S ribosomal subunit. Forms a loose heterodimer with protein S19. Forms two bridges to the 50S subunit in the 70S ribosome.

Located at the top of the head of the 30S subunit, it contacts several helices of the 16S rRNA. In the 70S ribosome it contacts the 23S rRNA (bridge B1a) and protein L5 of the 50S subunit (bridge B1b), connecting the 2 subunits; these bridges are implicated in subunit movement. Contacts the tRNAs in the A and P-sites. In Chlorobium limicola (strain DSM 245 / NBRC 103803 / 6330), this protein is Small ribosomal subunit protein uS13.